A 52-amino-acid chain; its full sequence is Eukaryotic translation initiation factor 5A (52 aa).

The residue at position 42 (Lys-42) is a Hypusine.

The protein belongs to the eIF-5A family. In terms of processing, lys-42 undergoes hypusination, a unique post-translational modification that consists in the addition of a butylamino group from spermidine to lysine side chain, leading to the formation of the unusual amino acid hypusine. eIF-5As are the only known proteins to undergo this modification, which is essential for their function.

It is found in the cytoplasm. Functionally, translation factor that promotes translation elongation and termination, particularly upon ribosome stalling at specific amino acid sequence contexts. Binds between the exit (E) and peptidyl (P) site of the ribosome and promotes rescue of stalled ribosome: specifically required for efficient translation of polyproline-containing peptides as well as other motifs that stall the ribosome. Acts as a ribosome quality control (RQC) cofactor by joining the RQC complex to facilitate peptidyl transfer during CAT tailing step. In Schistosoma mansoni (Blood fluke), this protein is Eukaryotic translation initiation factor 5A.